A 1344-amino-acid chain; its full sequence is DEAD-box ATP-dependent RNA helicase FANCM (1344 aa).

The tract at residues 39 to 61 is disordered; sequence SSSHFTPLANPPITANLTKPPAK. Residues 124–292 form the Helicase ATP-binding domain; the sequence is ITKTALFSNT…GIIDNLQIST (169 aa). 137–144 is an ATP binding site; sequence LPTGLGKT. The DEAH box signature appears at 240–243; that stretch reads DEAH. One can recognise a Helicase C-terminal domain in the interval 450-621; sequence KLSKMLEILV…SFNFHPSPRM (172 aa). Disordered regions lie at residues 765–790, 1110–1148, 1183–1218, and 1307–1344; these read VNTS…KDYE, EVSS…TQAE, YSAG…SNQD, and KQRS…LGLW. Acidic residues predominate over residues 1118–1135; sequence SADENEDVTGDSFEDSFI. Residues 1207–1218 are compositionally biased toward polar residues; sequence TPKTTNSESNQD. The segment covering 1308–1318 has biased composition (basic and acidic residues); the sequence is QRSEAKEKEDA.

Belongs to the DEAD box helicase family. DEAH subfamily. FANCM sub-subfamily.

The protein resides in the nucleus. The catalysed reaction is ATP + H2O = ADP + phosphate + H(+). Functionally, involved in ordered homologous recombination (HR) events in somatic and meiotic cells. Involved in the suppression of spontaneous HR events in somatic cells. Has an opposite function to the DNA binding cofactor MHF1 which promotes spontaneous HR. Functions in replicative repair independently of MHF1 and in a parallel pathway to the endonuclease MUS81. Acts in the same pathway as the two DNA-binding cofactors MHF1 and MHF2 to restrain class II meiotic crossover (CO), and acts exclusively with MHF1 and MHF2 during meiosis to repair DNA interstrand cross-links (ICLs). This common pathway is in parallel to the pathway that involves the RECQ4A helicase. Seems to be involved in the stabilization of recombination intermediates. Involved in DNA double-strand break (DSB) repair during meiosis. Required for synthesis-dependent strand annealing (SDSA) and to a lesser extent for single-strand annealing (SSA). May process meiotic DSB repair intermediates, possibly D-loops, driving them toward noncrossover (NCO) resolution. The chain is DEAD-box ATP-dependent RNA helicase FANCM from Arabidopsis thaliana (Mouse-ear cress).